The sequence spans 485 residues: UDP-N-acetylmuramate--L-alanine ligase (485 aa).

129-135 (GTHGKTT) serves as a coordination point for ATP.

The protein belongs to the MurCDEF family.

The protein localises to the cytoplasm. The catalysed reaction is UDP-N-acetyl-alpha-D-muramate + L-alanine + ATP = UDP-N-acetyl-alpha-D-muramoyl-L-alanine + ADP + phosphate + H(+). The protein operates within cell wall biogenesis; peptidoglycan biosynthesis. In terms of biological role, cell wall formation. This Vibrio parahaemolyticus serotype O3:K6 (strain RIMD 2210633) protein is UDP-N-acetylmuramate--L-alanine ligase.